The following is a 437-amino-acid chain: Glutamate-1-semialdehyde 2,1-aminomutase (437 aa).

Lys-277 carries the post-translational modification N6-(pyridoxal phosphate)lysine.

Belongs to the class-III pyridoxal-phosphate-dependent aminotransferase family. HemL subfamily. Homodimer. It depends on pyridoxal 5'-phosphate as a cofactor.

The protein localises to the cytoplasm. The catalysed reaction is (S)-4-amino-5-oxopentanoate = 5-aminolevulinate. It functions in the pathway porphyrin-containing compound metabolism; protoporphyrin-IX biosynthesis; 5-aminolevulinate from L-glutamyl-tRNA(Glu): step 2/2. Its pathway is porphyrin-containing compound metabolism; chlorophyll biosynthesis. The protein is Glutamate-1-semialdehyde 2,1-aminomutase of Thermosynechococcus vestitus (strain NIES-2133 / IAM M-273 / BP-1).